A 939-amino-acid polypeptide reads, in one-letter code: Isoleucine--tRNA ligase (939 aa).

The 'HIGH' region motif lies at 58–68 (PYANGDIHIGH). Glutamate 574 is a binding site for L-isoleucyl-5'-AMP. The 'KMSKS' region signature appears at 615–619 (KMSKS). Residue lysine 618 participates in ATP binding. 4 residues coordinate Zn(2+): cysteine 902, cysteine 905, cysteine 922, and cysteine 925.

This sequence belongs to the class-I aminoacyl-tRNA synthetase family. IleS type 1 subfamily. In terms of assembly, monomer. Zn(2+) is required as a cofactor.

Its subcellular location is the cytoplasm. The enzyme catalyses tRNA(Ile) + L-isoleucine + ATP = L-isoleucyl-tRNA(Ile) + AMP + diphosphate. Functionally, catalyzes the attachment of isoleucine to tRNA(Ile). As IleRS can inadvertently accommodate and process structurally similar amino acids such as valine, to avoid such errors it has two additional distinct tRNA(Ile)-dependent editing activities. One activity is designated as 'pretransfer' editing and involves the hydrolysis of activated Val-AMP. The other activity is designated 'posttransfer' editing and involves deacylation of mischarged Val-tRNA(Ile). In Aromatoleum aromaticum (strain DSM 19018 / LMG 30748 / EbN1) (Azoarcus sp. (strain EbN1)), this protein is Isoleucine--tRNA ligase.